The following is a 665-amino-acid chain: Coiled-coil domain-containing protein 138 (665 aa).

Residue threonine 48 is modified to Phosphothreonine. At serine 49 the chain carries Phosphoserine. Residues 198–323 (QQKFAEELQK…YEFMTIQRLK (126 aa)) adopt a coiled-coil conformation. Phosphoserine is present on serine 469.

The sequence is that of Coiled-coil domain-containing protein 138 (CCDC138) from Macaca fascicularis (Crab-eating macaque).